The primary structure comprises 289 residues: Heme oxygenase 1 (289 aa).

A compositionally biased stretch (polar residues) spans 1-12 (MERPQPDSSMPQ). The interval 1–24 (MERPQPDSSMPQDLSEALKEATKE) is disordered. At 1-266 (MERPQPDSSM…KPQPSVLSQA (266 aa)) the chain is on the cytoplasmic side. 4 residues coordinate heme b: K19, H26, Y135, and R184. The segment at 239–261 (RRAGSKVQDLAPTKASRGKPQPS) is disordered. S243 carries the post-translational modification Phosphoserine. The helical; Anchor for type IV membrane protein transmembrane segment at 267-289 (PLLRWVLTLSFLVATVAVGLYAM) threads the bilayer.

It belongs to the heme oxygenase family. As to quaternary structure, homodimer and higher order homooligomer. Oligomerization is crucial for its stability and function in the endoplasmic reticulum. Interacts with FLVCR2; this interaction is potentiated in the presence of heme. Post-translationally, a soluble form arises by proteolytic removal of the membrane anchor.

It is found in the endoplasmic reticulum membrane. The enzyme catalyses heme b + 3 reduced [NADPH--hemoprotein reductase] + 3 O2 = biliverdin IXalpha + CO + Fe(2+) + 3 oxidized [NADPH--hemoprotein reductase] + 3 H2O + H(+). Its activity is regulated as follows. Inhibited by metalloporphyrins such as Sn-, Co-, Mn- and Zn-protoporphyrins. In terms of biological role, catalyzes the oxidative cleavage of heme at the alpha-methene bridge carbon, released as carbon monoxide (CO), to generate biliverdin IXalpha, while releasing the central heme iron chelate as ferrous iron. Affords protection against programmed cell death and this cytoprotective effect relies on its ability to catabolize free heme and prevent it from sensitizing cells to undergo apoptosis. Its function is as follows. Catalyzes the oxidative cleavage of heme at the alpha-methene bridge carbon, released as carbon monoxide (CO), to generate biliverdin IXalpha, while releasing the central heme iron chelate as ferrous iron. This chain is Heme oxygenase 1 (HMOX1), found in Bos taurus (Bovine).